The chain runs to 458 residues: MNKDFNEFKKFIYNKKVAIIGLGISNMPLVEFLSNLGARVTGFDKKNENELENNINELKAKGVNFELGENYLDKLSNFDVVFRTPSMRTDHPILIKAKSEGAYITSEMEEFIKYCPAKLFCITGSDGKTTTTTLIYNILKTEGYTVWVGGNIGNPLFTKIEEIKKDDKVVLELSSFQLMSIKEPIEVALVTNVSPNHLDIHKDMEEYIKAKKNIFKYQRENDLLVINEDNKITKSMEEECRGRLLKFSMKEKLKEGSFYYNEDLYINEKKVCNVSEVKLKGMHNVENLLAAFSCVSEDSSIDSMREVAKNFNGVEHRLEFVKEIQEVKYFNDSIASSPTRTLAALQSFDRPVILIAGGYDKKISFEVLAKEGISHIKHLILLGDTKYKIEEAFKKVMRDSSEDLPISICNSIEEAINIAKENGESGDVVTLSPACASFDMFKNFEERGNKFKSIIRNL.

124-130 (GSDGKTT) contributes to the ATP binding site.

This sequence belongs to the MurCDEF family.

Its subcellular location is the cytoplasm. The enzyme catalyses UDP-N-acetyl-alpha-D-muramoyl-L-alanine + D-glutamate + ATP = UDP-N-acetyl-alpha-D-muramoyl-L-alanyl-D-glutamate + ADP + phosphate + H(+). It functions in the pathway cell wall biogenesis; peptidoglycan biosynthesis. Its function is as follows. Cell wall formation. Catalyzes the addition of glutamate to the nucleotide precursor UDP-N-acetylmuramoyl-L-alanine (UMA). In Clostridium tetani (strain Massachusetts / E88), this protein is UDP-N-acetylmuramoylalanine--D-glutamate ligase.